Consider the following 157-residue polypeptide: Large ribosomal subunit protein uL11 (157 aa).

Belongs to the universal ribosomal protein uL11 family. In terms of assembly, part of the ribosomal stalk of the 50S ribosomal subunit. Interacts with L10 and the large rRNA to form the base of the stalk. L10 forms an elongated spine to which L12 dimers bind in a sequential fashion forming a multimeric L10(L12)X complex.

Functionally, forms part of the ribosomal stalk which helps the ribosome interact with GTP-bound translation factors. The sequence is that of Large ribosomal subunit protein uL11 from Methanocorpusculum labreanum (strain ATCC 43576 / DSM 4855 / Z).